The following is a 110-amino-acid chain: uncharacterized protein (110 aa).

It belongs to the RuBisCO large chain family.

The protein localises to the mitochondrion. This is an uncharacterized protein from Arabidopsis thaliana (Mouse-ear cress).